Here is a 267-residue protein sequence, read N- to C-terminus: Tryptophan synthase alpha chain (267 aa).

Catalysis depends on proton acceptor residues Glu-49 and Asp-60.

It belongs to the TrpA family. Tetramer of two alpha and two beta chains.

It carries out the reaction (1S,2R)-1-C-(indol-3-yl)glycerol 3-phosphate + L-serine = D-glyceraldehyde 3-phosphate + L-tryptophan + H2O. Its pathway is amino-acid biosynthesis; L-tryptophan biosynthesis; L-tryptophan from chorismate: step 5/5. The alpha subunit is responsible for the aldol cleavage of indoleglycerol phosphate to indole and glyceraldehyde 3-phosphate. This Citrifermentans bemidjiense (strain ATCC BAA-1014 / DSM 16622 / JCM 12645 / Bem) (Geobacter bemidjiensis) protein is Tryptophan synthase alpha chain.